A 318-amino-acid polypeptide reads, in one-letter code: L-lactate dehydrogenase (318 aa).

Residues valine 20, aspartate 41, lysine 46, tyrosine 71, and glycine 85–alanine 86 contribute to the NAD(+) site. Substrate contacts are provided by residues glutamine 88, arginine 94, and asparagine 126 to aspartate 129. Residues alanine 124–asparagine 126 and serine 149 contribute to the NAD(+) site. Aspartate 154 to arginine 157 lines the substrate pocket. Positions 159 and 174 each coordinate beta-D-fructose 1,6-bisphosphate. The active-site Proton acceptor is histidine 181. Residue tyrosine 226 is modified to Phosphotyrosine. Substrate is bound at residue threonine 235.

The protein belongs to the LDH/MDH superfamily. LDH family. Homotetramer.

It localises to the cytoplasm. It carries out the reaction (S)-lactate + NAD(+) = pyruvate + NADH + H(+). It participates in fermentation; pyruvate fermentation to lactate; (S)-lactate from pyruvate: step 1/1. Allosterically activated by fructose 1,6-bisphosphate (FBP). Functionally, catalyzes the conversion of lactate to pyruvate. The sequence is that of L-lactate dehydrogenase from Priestia megaterium (Bacillus megaterium).